The sequence spans 679 residues: MSSEVTPKVPERPSRRKTSELFPLSGSESGDIEANSEPPTPAGTPNVPTRRPILKAKTMTSFESGMDQESLPKVPLQRPVRRSTTEELNNVMNNTSKELEEIESLISKHNIHNVSRKKSPTSVEEGKVAAIHQNGQRSASDNKTSTNPSPLEKNEHEGAEGNEFAISPSNLVNKSNNEVTEHSDSEDLTEKQKVHAALDNEAGDRSHFEEKLIPGDMKVQVDVSKDVEEGSLNALPPSGITESDDKAEKFTKHPESSLEELQKHQEQQEEKIFQNPTDEESTTSLNEKQEGKDNMEVNSQPQGPSDTETVIAATSSNVPSQIASEEENDVPVIPRSRPKKDFEAHVQKEELPNTQEKRVSEECDSTLISTEEESKIPKIPSERPKRRAPPPVPKKPSSRIAAFQEMLQKQQQQDLHNNGNSSATTASADIAKKHTDSSITSDTTKADFTSKLNGLFALPGMVNPGQLPPSLEKKLSSPDTESKLGPQDQSQAKTGPLGGTRRGRGPRGRKLPSKVASVEKIEEDDNTNKIEIFNNWNVSSSFSKEKVLIDTTPGEQAERALDEKSKSIPEEQREQSPNKMEAALCPFELDEKEKLPANAESDPLSQLPQTNTVGNRKAISEESLSPSEAIANRDQNDTTEIQEQQMEDQMEVDMERELSGGYEDVDSALHSEEASFHSL.

The disordered stretch occupies residues 1 to 85; the sequence is MSSEVTPKVP…LQRPVRRSTT (85 aa). The span at 9–19 shows a compositional bias: basic and acidic residues; the sequence is VPERPSRRKTS. T18 carries the post-translational modification Phosphothreonine. The residue at position 36 (S36) is a Phosphoserine. A Phosphothreonine modification is found at T58. S70 is modified (phosphoserine). A Phosphothreonine modification is found at T85. S104 bears the Phosphoserine mark. Disordered stretches follow at residues 111-522, 549-580, and 593-679; these read IHNV…EKIE, IDTT…PNKM, and EKLP…FHSL. 2 stretches are compositionally biased toward polar residues: residues 133–149 and 167–178; these read QNGQ…TNPS and SPSNLVNKSNNE. Positions 179–213 are enriched in basic and acidic residues; that stretch reads VTEHSDSEDLTEKQKVHAALDNEAGDRSHFEEKLI. Phosphoserine is present on residues S183, S206, and S231. Residues 243–272 are compositionally biased toward basic and acidic residues; that stretch reads SDDKAEKFTKHPESSLEELQKHQEQQEEKI. T277 is modified (phosphothreonine). S284 carries the phosphoserine modification. Residues 296–323 show a composition bias toward polar residues; the sequence is EVNSQPQGPSDTETVIAATSSNVPSQIA. S324 is subject to Phosphoserine. Basic and acidic residues-rich tracts occupy residues 339-361 and 372-383; these read KKDF…RVSE and EESKIPKIPSER. Residues 383–396 are interaction with SH3 domain of ABP1; the sequence is RPKRRAPPPVPKKP. Polar residues-rich tracts occupy residues 414–427 and 437–452; these read DLHN…TTAS and SSIT…TSKL. Residues 471–482 are compositionally biased toward basic and acidic residues; sequence LEKKLSSPDTES. The span at 501–512 shows a compositional bias: basic residues; that stretch reads RRGRGPRGRKLP. Position 552 is a phosphothreonine (T552). Residues 556–576 are compositionally biased toward basic and acidic residues; it reads QAERALDEKSKSIPEEQREQS. Position 576 is a phosphoserine (S576). Polar residues predominate over residues 603 to 614; it reads PLSQLPQTNTVG. Phosphoserine is present on residues S620, S623, S625, S627, S667, S671, S675, and S678. A compositionally biased stretch (basic and acidic residues) spans 667-679; that stretch reads SALHSEEASFHSL.

Belongs to the AIM21 family. In terms of assembly, interacts with ribosomes. Interacts with ABP1.

It is found in the cytoplasm. Its subcellular location is the cytoskeleton. It localises to the actin patch. Its function is as follows. Involved in mitochondrial migration along actin filaments. In Saccharomyces cerevisiae (strain JAY291) (Baker's yeast), this protein is Altered inheritance of mitochondria protein 21 (AIM21).